The following is a 276-amino-acid chain: Diaminopimelate epimerase (276 aa).

Positions 11, 44, and 64 each coordinate substrate. Cys73 acts as the Proton donor in catalysis. Residues Gly74–Asn75, Asn157, Asn190, and Glu208–Arg209 each bind substrate. Cys217 functions as the Proton acceptor in the catalytic mechanism. A substrate-binding site is contributed by Gly218–Ser219.

The protein belongs to the diaminopimelate epimerase family. In terms of assembly, homodimer.

It localises to the cytoplasm. The enzyme catalyses (2S,6S)-2,6-diaminopimelate = meso-2,6-diaminopimelate. It functions in the pathway amino-acid biosynthesis; L-lysine biosynthesis via DAP pathway; DL-2,6-diaminopimelate from LL-2,6-diaminopimelate: step 1/1. Catalyzes the stereoinversion of LL-2,6-diaminopimelate (L,L-DAP) to meso-diaminopimelate (meso-DAP), a precursor of L-lysine and an essential component of the bacterial peptidoglycan. The chain is Diaminopimelate epimerase from Blochmanniella floridana.